Consider the following 644-residue polypeptide: Exoribonuclease 2 (644 aa).

The RNB domain maps to 189–516; the sequence is REDLTALDFV…NHRLLKAIIK (328 aa). Residues 561 to 643 form the S1 motif domain; the sequence is DSRFAAEIID…ETRSVIARPV (83 aa).

This sequence belongs to the RNR ribonuclease family. RNase II subfamily.

The protein resides in the cytoplasm. It carries out the reaction Exonucleolytic cleavage in the 3'- to 5'-direction to yield nucleoside 5'-phosphates.. Functionally, involved in mRNA degradation. Hydrolyzes single-stranded polyribonucleotides processively in the 3' to 5' direction. The polypeptide is Exoribonuclease 2 (Cronobacter sakazakii (strain ATCC BAA-894) (Enterobacter sakazakii)).